An 85-amino-acid chain; its full sequence is Large ribosomal subunit protein bL27 (85 aa).

Residues 1–20 (MAHKKAGGSSRNGRDSEAKR) are disordered.

This sequence belongs to the bacterial ribosomal protein bL27 family.

The chain is Large ribosomal subunit protein bL27 from Aeromonas salmonicida (strain A449).